The chain runs to 318 residues: Thymidylate synthase (318 aa).

Residues Arg-25 and 180-181 (RR) each bind dUMP. Cys-200 acts as the Nucleophile in catalysis. DUMP contacts are provided by residues 220 to 223 (RSGD), Asn-231, and 261 to 263 (HIY). Asp-223 lines the (6R)-5,10-methylene-5,6,7,8-tetrahydrofolate pocket. Ala-317 is a (6R)-5,10-methylene-5,6,7,8-tetrahydrofolate binding site.

This sequence belongs to the thymidylate synthase family. Bacterial-type ThyA subfamily. In terms of assembly, homodimer.

The protein localises to the cytoplasm. The catalysed reaction is dUMP + (6R)-5,10-methylene-5,6,7,8-tetrahydrofolate = 7,8-dihydrofolate + dTMP. It functions in the pathway pyrimidine metabolism; dTTP biosynthesis. In terms of biological role, catalyzes the reductive methylation of 2'-deoxyuridine-5'-monophosphate (dUMP) to 2'-deoxythymidine-5'-monophosphate (dTMP) while utilizing 5,10-methylenetetrahydrofolate (mTHF) as the methyl donor and reductant in the reaction, yielding dihydrofolate (DHF) as a by-product. This enzymatic reaction provides an intracellular de novo source of dTMP, an essential precursor for DNA biosynthesis. This chain is Thymidylate synthase, found in Lactobacillus johnsonii (strain CNCM I-12250 / La1 / NCC 533).